The sequence spans 229 residues: Large ribosomal subunit protein uL1 (229 aa).

It belongs to the universal ribosomal protein uL1 family. Part of the 50S ribosomal subunit.

Functionally, binds directly to 23S rRNA. The L1 stalk is quite mobile in the ribosome, and is involved in E site tRNA release. In terms of biological role, protein L1 is also a translational repressor protein, it controls the translation of the L11 operon by binding to its mRNA. The chain is Large ribosomal subunit protein uL1 from Haemophilus ducreyi (strain 35000HP / ATCC 700724).